A 290-amino-acid polypeptide reads, in one-letter code: Protein MGF 110-9L (290 aa).

The signal sequence occupies residues 1-19 (MKVIVLLLVLAVMQPVIQS). One copy of the A repeat lies at 1 to 160 (MKVIVLLLVL…QYSRMRMQAA (160 aa)). Transmembrane regions (helical) follow at residues 128–148 (VENI…IGYV) and 163–183 (LLIF…IIMN). The stretch at 161–290 (TRLLIFLGLY…KRHVINQDDL (130 aa)) is one B repeat.

This sequence belongs to the asfivirus MGF 110 family.

The protein localises to the membrane. This chain is Protein MGF 110-9L, found in Ornithodoros (relapsing fever ticks).